The chain runs to 444 residues: Presenilin sel-12 (444 aa).

Residues 1–45 (MPSTRRQQEGGGADAETHTVYGTNLITNRNSQEDENVVEEAELKY) are Cytoplasmic-facing. A helical transmembrane segment spans residues 46–66 (GASHVIHLFVPVSLCMALVVF). Over 67–101 (TMNTITFYSQNNGRHLLYTPFVRETDSIVEKGLMS) the chain is Lumenal. A helical transmembrane segment spans residues 102–122 (LGNALVMLCVVVLMTVLLIVF). Residues 123–130 (YKYKFYKL) lie on the Cytoplasmic side of the membrane. The chain crosses the membrane as a helical span at residues 131-151 (IHGWLIVSSFLLLFLFTTIYV). Residues 152–163 (QEVLKSFDVSPS) lie on the Lumenal side of the membrane. Residues 164 to 184 (ALLVLFGLGNYGVLGMMCIHW) traverse the membrane as a helical segment. At 185–189 (KGPLR) the chain is on the cytoplasmic side. Residues 190 to 210 (LQQFYLITMSALMALVFIKYL) traverse the membrane as a helical segment. The Lumenal portion of the chain corresponds to 211–212 (PE). The helical transmembrane segment at 213-233 (WTVWFVLFVISVWDLVAVLTP) threads the bilayer. The active site involves D226. Over 234-359 (KGPLRYLVET…RHEEEERGVK (126 aa)) the chain is Cytoplasmic. Residues 275–331 (TDPREPTSSDSNTSTAFPGEASCSSETPKRPKVKRIPQKVQIESNTTASTTQNSGVR) form a disordered region. 2 stretches are compositionally biased toward polar residues: residues 282-300 (SSDS…CSSE) and 315-329 (QIES…QNSG). Residues 360-380 (LGLGDFIFYSVLLGKASSYFD) form a helical membrane-spanning segment. D364 is a catalytic residue. Topologically, residues 381 to 384 (WNTT) are lumenal. The chain crosses the membrane as a helical span at residues 385–405 (IACYVAILIGLCFTLVLLAVF). Topologically, residues 406-413 (KRALPALP) are cytoplasmic. Positions 410 to 412 (PAL) match the PAL motif. An intramembrane region (helical) is located at residues 414-434 (ISIFSGLIFYFCTRWIITPFV). Residues 435–444 (TQVSQKCLLY) lie on the Cytoplasmic side of the membrane.

The protein belongs to the peptidase A22A family. In terms of assembly, homodimer. Component of the gamma-secretase complex, a complex probably composed of the presenilin homodimer (sel-12, hop-1 or spe-4), nicastrin (aph-2), aph-1 and pen-2. Interacts with sel-10. Expressed in most neurons.

It localises to the endoplasmic reticulum membrane. It is found in the golgi apparatus membrane. Functionally, probable catalytic subunit of the gamma-secretase complex, an endoprotease complex that catalyzes the intramembrane cleavage of integral membrane proteins such as Notch receptors (lin-12 or glp-1). Provides the major presenilin function compared to hop-1 and spe-4. Required cell-autonomously for correct neurite connectivity of the AIY cholinergic interneurons and their correct functioning in thermotaxis. Required for mesodermal patterning of muscle function. Promotes basement membrane gap formation during tissue remodeling. The sequence is that of Presenilin sel-12 from Caenorhabditis elegans.